Here is a 708-residue protein sequence, read N- to C-terminus: Leukotoxin translocation ATP-binding protein LktB (708 aa).

Residues 1–126 form the Peptidase C39 domain; sequence MEANHQRNDL…ACYQGQLILV (126 aa). In terms of domain architecture, ABC transmembrane type-1 spans 155 to 437; sequence FLETLIVSIF…LAQLWQDFQQ (283 aa). 5 helical membrane-spanning segments follow: residues 159–179, 192–212, 270–290, 296–316, and 389–409; these read LIVS…FQVV, LNII…LSGL, ALTS…MWYY, LVIL…SPIL, and VMVI…LSIG. Residues 469-704 enclose the ABC transporter domain; that stretch reads ISFKNIRFRY…SNGLYSYLHQ (236 aa). 503-510 lines the ATP pocket; the sequence is GRSGSGKS.

The protein belongs to the ABC transporter superfamily. Protein-1 exporter (TC 3.A.1.109) family. As to quaternary structure, homodimer.

It is found in the cell inner membrane. It catalyses the reaction ATP + H2O + proteinSide 1 = ADP + phosphate + proteinSide 2.. Its function is as follows. Part of the ABC transporter complex LktBD involved in leukotoxin export. Transmembrane domains (TMD) form a pore in the inner membrane and the ATP-binding domain (NBD) is responsible for energy generation. In Mannheimia haemolytica (Pasteurella haemolytica), this protein is Leukotoxin translocation ATP-binding protein LktB (lktB).